Reading from the N-terminus, the 105-residue chain is Guanidinium exporter (105 aa).

A helical transmembrane segment spans residues 1 to 21; that stretch reads MSWIILVIAGLLEVVWAVGLK. The Cytoplasmic portion of the chain corresponds to 22 to 28; sequence YTHGFSR. The chain crosses the membrane as a helical span at residues 29 to 49; that stretch reads LTPSVITVTAMIVSLALLAWA. Over 50–57 the chain is Periplasmic; the sequence is MKSLPVGT. A helical membrane pass occupies residues 58–78; the sequence is AYAVWTGIGAVGAAITGIVLL. Topologically, residues 79 to 81 are cytoplasmic; it reads GES. A helical membrane pass occupies residues 82–102; sequence ANPMRLASLALIVLGIIGLKL. The Periplasmic segment spans residues 103–105; it reads STH.

This sequence belongs to the drug/metabolite transporter (DMT) superfamily. Small multidrug resistance (SMR) (TC 2.A.7.1) family. Gdx/SugE subfamily.

Its subcellular location is the cell inner membrane. Guanidinium ion exporter. Couples guanidinium export to the proton motive force, exchanging one guanidinium ion for two protons. The protein is Guanidinium exporter of Escherichia coli O6:H1 (strain CFT073 / ATCC 700928 / UPEC).